The following is a 471-amino-acid chain: ATP synthase subunit beta (471 aa).

ATP is bound at residue 156-163 (GGAGVGKT).

This sequence belongs to the ATPase alpha/beta chains family. As to quaternary structure, F-type ATPases have 2 components, CF(1) - the catalytic core - and CF(0) - the membrane proton channel. CF(1) has five subunits: alpha(3), beta(3), gamma(1), delta(1), epsilon(1). CF(0) has three main subunits: a(1), b(2) and c(9-12). The alpha and beta chains form an alternating ring which encloses part of the gamma chain. CF(1) is attached to CF(0) by a central stalk formed by the gamma and epsilon chains, while a peripheral stalk is formed by the delta and b chains.

Its subcellular location is the cell inner membrane. The enzyme catalyses ATP + H2O + 4 H(+)(in) = ADP + phosphate + 5 H(+)(out). In terms of biological role, produces ATP from ADP in the presence of a proton gradient across the membrane. The catalytic sites are hosted primarily by the beta subunits. This is ATP synthase subunit beta from Nitratidesulfovibrio vulgaris (strain DSM 19637 / Miyazaki F) (Desulfovibrio vulgaris).